We begin with the raw amino-acid sequence, 385 residues long: Deoxyguanosinetriphosphate triphosphohydrolase-like protein (385 aa).

In terms of domain architecture, HD spans 75-204 (RLTHSLEVAQ…INFADEIAYN (130 aa)).

This sequence belongs to the dGTPase family. Type 2 subfamily.

The chain is Deoxyguanosinetriphosphate triphosphohydrolase-like protein from Geobacter sulfurreducens (strain ATCC 51573 / DSM 12127 / PCA).